The primary structure comprises 336 residues: Probable G-protein coupled receptor 160 (336 aa).

The Extracellular portion of the chain corresponds to 1–21 (MTALPSKNCSFQYQSHQAPRS). N-linked (GlcNAc...) asparagine glycosylation is present at Asn8. The chain crosses the membrane as a helical span at residues 22-42 (LDATCLLLLIILGKVLLNVLI). The Cytoplasmic portion of the chain corresponds to 43-56 (LRVKRKDTSWSFME). The helical transmembrane segment at 57–77 (YFCFSLALVDLLLLVNISVLT) threads the bilayer. The Extracellular segment spans residues 78–95 (YFRDFVVLGIRFTNYHIC). Residues 96-116 (LLTQIVSFAYGFLHYPVCSLA) traverse the membrane as a helical segment. Residues 117–136 (CIDYWCNLSRATKPSSRWQK) are Cytoplasmic-facing. Residues 137-157 (LLYLLTVILTWISVLAYVLGD) form a helical membrane-spanning segment. At 158-187 (PAISASLKTHKTSVNQCPSYVSTQSHWLSL) the chain is on the extracellular side. The helical transmembrane segment at 188 to 208 (SMLMILSVAFLISWQEVVALI) threads the bilayer. The Cytoplasmic portion of the chain corresponds to 209–243 (QAIRIASYKNKAVLYFPFPPHTSYTVSPRAVLLPR). A helical membrane pass occupies residues 244–264 (LIVCFLGTWFPFVALQVLILS). The Extracellular portion of the chain corresponds to 265-272 (LRVQIPAY). The chain crosses the membrane as a helical span at residues 273 to 293 (IEMNVPWLYFVNSFLIAAVYW). The Cytoplasmic portion of the chain corresponds to 294–336 (FNCHKLYWRDGMFPVDPFINWKCCFVPVHRLKQVERPMSIIIC).

The protein belongs to the G-protein coupled receptor 1 family.

Its subcellular location is the cell membrane. Its function is as follows. Orphan receptor. The polypeptide is Probable G-protein coupled receptor 160 (Gpr160) (Rattus norvegicus (Rat)).